Consider the following 229-residue polypeptide: Protein AF_2251 (229 aa).

The protein belongs to the CinA family.

The polypeptide is Protein AF_2251 (Archaeoglobus fulgidus (strain ATCC 49558 / DSM 4304 / JCM 9628 / NBRC 100126 / VC-16)).